A 351-amino-acid chain; its full sequence is Phosphoribosylformylglycinamidine cyclo-ligase (351 aa).

The protein belongs to the AIR synthase family.

The protein resides in the cytoplasm. The enzyme catalyses 2-formamido-N(1)-(5-O-phospho-beta-D-ribosyl)acetamidine + ATP = 5-amino-1-(5-phospho-beta-D-ribosyl)imidazole + ADP + phosphate + H(+). It participates in purine metabolism; IMP biosynthesis via de novo pathway; 5-amino-1-(5-phospho-D-ribosyl)imidazole from N(2)-formyl-N(1)-(5-phospho-D-ribosyl)glycinamide: step 2/2. The protein is Phosphoribosylformylglycinamidine cyclo-ligase of Burkholderia pseudomallei (strain 668).